We begin with the raw amino-acid sequence, 31 residues long: Cytochrome b6-f complex subunit 6 (31 aa).

Residues 4-26 form a helical membrane-spanning segment; that stretch reads ITSYFGFLLAALTITSALLIGLN.

The protein belongs to the PetL family. The 4 large subunits of the cytochrome b6-f complex are cytochrome b6, subunit IV (17 kDa polypeptide, PetD), cytochrome f and the Rieske protein, while the 4 small subunits are PetG, PetL, PetM and PetN. The complex functions as a dimer.

Its subcellular location is the plastid. It localises to the chloroplast thylakoid membrane. Component of the cytochrome b6-f complex, which mediates electron transfer between photosystem II (PSII) and photosystem I (PSI), cyclic electron flow around PSI, and state transitions. PetL is important for photoautotrophic growth as well as for electron transfer efficiency and stability of the cytochrome b6-f complex. In Amborella trichopoda, this protein is Cytochrome b6-f complex subunit 6.